Here is a 580-residue protein sequence, read N- to C-terminus: Alpha-glucosidase (580 aa).

Residues 1–19 (MRPLGALSLFALLATTVSG) form the signal peptide. Residues Asn102 and Asn127 are each glycosylated (N-linked (GlcNAc...) asparagine). Asp224 functions as the Nucleophile in the catalytic mechanism. Residue Glu290 is the Proton donor of the active site. Asn501 carries N-linked (GlcNAc...) asparagine glycosylation. Residues 560–580 (AAAINLSIGLLLAIMARYIFV) traverse the membrane as a helical segment.

Belongs to the glycosyl hydrolase 13 family. In terms of assembly, (Microbial infection) Binds to L.sphaericus BinB subunit of the binary toxin BinAB. In terms of tissue distribution, in 4th-instar larvae produced in the brush border membranes of the gastric caeca and the posterior stomach cells (at protein level).

The protein resides in the membrane. The enzyme catalyses Hydrolysis of terminal, non-reducing (1-&gt;4)-linked alpha-D-glucose residues with release of alpha-D-glucose.. Probably an alpha-glucosidase, it has no alpha-amylase function. Its function is as follows. (Microbial infection) Serves as the larval receptor for Lysinibacillus sphaericus BinB toxin. The chain is Alpha-glucosidase from Culex pipiens (House mosquito).